The chain runs to 258 residues: NAD(P)H-hydrate epimerase (258 aa).

The region spanning 15-244 (AFQLDQELMS…RIAKEYGIED (230 aa)) is the YjeF N-terminal domain. Position 75-79 (75-79 (NNGGD)) interacts with (6S)-NADPHX. K(+) is bound by residues asparagine 76 and aspartate 145. (6S)-NADPHX contacts are provided by residues 149-155 (GFSFKPP) and aspartate 181. Serine 184 lines the K(+) pocket.

Belongs to the NnrE/AIBP family. The cofactor is K(+).

The protein localises to the cytoplasm. It localises to the mitochondrion. It catalyses the reaction (6R)-NADHX = (6S)-NADHX. The catalysed reaction is (6R)-NADPHX = (6S)-NADPHX. Functionally, catalyzes the epimerization of the S- and R-forms of NAD(P)HX, a damaged form of NAD(P)H that is a result of enzymatic or heat-dependent hydration. This is a prerequisite for the S-specific NAD(P)H-hydrate dehydratase to allow the repair of both epimers of NAD(P)HX. In Candida albicans (strain WO-1) (Yeast), this protein is NAD(P)H-hydrate epimerase.